The following is a 313-amino-acid chain: Phosphoenolpyruvate phosphomutase (313 aa).

Residues 1–23 are disordered; the sequence is MNATERPGSDGTGSPESVGSRLK. Asp-69 acts as the Nucleophile in catalysis.

It belongs to the isocitrate lyase/PEP mutase superfamily. PEP mutase family.

The enzyme catalyses phosphoenolpyruvate + H(+) = 3-phosphonopyruvate. Its pathway is secondary metabolite biosynthesis; bialaphos biosynthesis. In terms of biological role, formation of a carbon-phosphorus bond by converting phosphoenolpyruvate (PEP) to phosphonopyruvate (P-Pyr). This Streptomyces viridochromogenes (strain DSM 40736 / JCM 4977 / BCRC 1201 / Tue 494) protein is Phosphoenolpyruvate phosphomutase (ppm).